The chain runs to 276 residues: Exosome complex component RRP43 (276 aa).

The residue at position 2 (Ala2) is an N-acetylalanine.

This sequence belongs to the RNase PH family. In terms of assembly, component of the RNA exosome core complex (Exo-9), composed of EXOSC1, EXOSC2, EXOSC3, EXOSC4, EXOSC5, EXOSC6, EXOSC7, EXOSC8 and EXOSC9; within the complex interacts with EXOSC5 and EXOSC6. The catalytically inactive RNA exosome core complex (Exo-9) associates with the catalytic subunit EXOSC10/RRP6. Exo-9 may associate with DIS3 to form the nucleolar exosome complex, or DIS3L to form the cytoplasmic exosome complex. Exo-9 is formed by a hexameric base ring consisting of the heterodimers EXOSC4-EXOSC9, EXOSC5-EXOSC8 and EXOSC6-EXOSC7, and a cap ring consisting of EXOSC1, EXOSC2 and EXOSC3. The RNA exosome complex associates with cofactors C1D/RRP47, MPHOSPH6/MPP6 and MTREX/MTR4.

Its subcellular location is the cytoplasm. It is found in the nucleus. The protein localises to the nucleolus. Functionally, non-catalytic component of the RNA exosome complex which has 3'-&gt;5' exoribonuclease activity and participates in a multitude of cellular RNA processing and degradation events. In the nucleus, the RNA exosome complex is involved in proper maturation of stable RNA species such as rRNA, snRNA and snoRNA, in the elimination of RNA processing by-products and non-coding 'pervasive' transcripts, such as antisense RNA species and promoter-upstream transcripts (PROMPTs), and of mRNAs with processing defects, thereby limiting or excluding their export to the cytoplasm. The RNA exosome may be involved in Ig class switch recombination (CSR) and/or Ig variable region somatic hypermutation (SHM) by targeting AICDA deamination activity to transcribed dsDNA substrates. In the cytoplasm, the RNA exosome complex is involved in general mRNA turnover and specifically degrades inherently unstable mRNAs containing AU-rich elements (AREs) within their 3' untranslated regions, and in RNA surveillance pathways, preventing translation of aberrant mRNAs. It seems to be involved in degradation of histone mRNA. The catalytic inactive RNA exosome core complex of 9 subunits (Exo-9) is proposed to play a pivotal role in the binding and presentation of RNA for ribonucleolysis, and to serve as a scaffold for the association with catalytic subunits and accessory proteins or complexes. EXOSC8 binds to ARE-containing RNAs. This is Exosome complex component RRP43 (Exosc8) from Mus musculus (Mouse).